Here is a 346-residue protein sequence, read N- to C-terminus: NADH-ubiquinone oxidoreductase chain 2 (346 aa).

Helical transmembrane passes span 1–21 (MNPHATPVLVLSLALGTTITI), 25–45 (HWVLAWTGLEINTLAIIPLIS), 60–80 (FLTQAAASALVLFSSMTNAWA), 95–115 (CLLLTAAIAIKLGLVPFHFWF), 124–144 (LMTALLLSTLMKFPPLTLLLM), 149–169 (LNPALLTTMALASAALGGWMG), 178–195 (ILAFSSISHLGWIAIILV), 200–219 (LALLTFYLYTIMTSAVFMAL), 242–262 (ATLMLVLLSLAGLPPLTGFMP), 274–294 (EMTPAAMAIAMLSLLSLFFYL), and 326–346 (AILASLSILLLPLSPMIHAIV).

It belongs to the complex I subunit 2 family.

The protein resides in the mitochondrion inner membrane. It catalyses the reaction a ubiquinone + NADH + 5 H(+)(in) = a ubiquinol + NAD(+) + 4 H(+)(out). Its function is as follows. Core subunit of the mitochondrial membrane respiratory chain NADH dehydrogenase (Complex I) that is believed to belong to the minimal assembly required for catalysis. Complex I functions in the transfer of electrons from NADH to the respiratory chain. The immediate electron acceptor for the enzyme is believed to be ubiquinone. The sequence is that of NADH-ubiquinone oxidoreductase chain 2 (MT-ND2) from Sibirionetta formosa (Baikal teal).